We begin with the raw amino-acid sequence, 382 residues long: UDP-4-amino-4-deoxy-L-arabinose--oxoglutarate aminotransferase (382 aa).

K182 carries the post-translational modification N6-(pyridoxal phosphate)lysine.

The protein belongs to the DegT/DnrJ/EryC1 family. ArnB subfamily. Homodimer. Requires pyridoxal 5'-phosphate as cofactor.

The enzyme catalyses UDP-4-amino-4-deoxy-beta-L-arabinose + 2-oxoglutarate = UDP-beta-L-threo-pentopyranos-4-ulose + L-glutamate. It participates in nucleotide-sugar biosynthesis; UDP-4-deoxy-4-formamido-beta-L-arabinose biosynthesis; UDP-4-deoxy-4-formamido-beta-L-arabinose from UDP-alpha-D-glucuronate: step 2/3. The protein operates within bacterial outer membrane biogenesis; lipopolysaccharide biosynthesis. Catalyzes the conversion of UDP-4-keto-arabinose (UDP-Ara4O) to UDP-4-amino-4-deoxy-L-arabinose (UDP-L-Ara4N). The modified arabinose is attached to lipid A and is required for resistance to polymyxin and cationic antimicrobial peptides. This is UDP-4-amino-4-deoxy-L-arabinose--oxoglutarate aminotransferase from Yersinia enterocolitica serotype O:8 / biotype 1B (strain NCTC 13174 / 8081).